The primary structure comprises 403 residues: Digeranylgeranylglycerophospholipid reductase 1 (403 aa).

Residues Ala14, Asp33, Cys44, Ala45, Gly47, Arg98, Val122, Asp277, Gly289, and Ile290 each contribute to the FAD site.

This sequence belongs to the geranylgeranyl reductase family. DGGGPL reductase subfamily. FAD is required as a cofactor.

The catalysed reaction is a 2,3-bis-O-phytanyl-sn-glycerol 1-phospholipid + 8 A = a 2,3-bis-O-(geranylgeranyl)-sn-glycerol 1-phospholipid + 8 AH2. The enzyme catalyses 2,3-bis-O-(phytanyl)-sn-glycerol 1-phosphate + 8 A = 2,3-bis-O-(geranylgeranyl)-sn-glycerol 1-phosphate + 8 AH2. It catalyses the reaction CDP-2,3-bis-O-(geranylgeranyl)-sn-glycerol + 8 AH2 = CDP-2,3-bis-O-(phytanyl)-sn-glycerol + 8 A. It carries out the reaction archaetidylserine + 8 AH2 = 2,3-bis-O-phytanyl-sn-glycero-3-phospho-L-serine + 8 A. It functions in the pathway membrane lipid metabolism; glycerophospholipid metabolism. Functionally, is involved in the reduction of 2,3-digeranylgeranylglycerophospholipids (unsaturated archaeols) into 2,3-diphytanylglycerophospholipids (saturated archaeols) in the biosynthesis of archaeal membrane lipids. Catalyzes the formation of archaetidic acid (2,3-di-O-phytanyl-sn-glyceryl phosphate) from 2,3-di-O-geranylgeranylglyceryl phosphate (DGGGP) via the hydrogenation of each double bond of the isoprenoid chains. Is also probably able to reduce double bonds of geranyl groups in CDP-2,3-bis-O-(geranylgeranyl)-sn-glycerol and archaetidylserine, thus acting at various stages in the biosynthesis of archaeal membrane lipids. This is Digeranylgeranylglycerophospholipid reductase 1 from Methanosphaera stadtmanae (strain ATCC 43021 / DSM 3091 / JCM 11832 / MCB-3).